The following is a 469-amino-acid chain: Trigger factor (469 aa).

The PPIase FKBP-type domain maps to 162 to 243; that stretch reads GDFVSIDLSA…VKSVKERELP (82 aa). The disordered stretch occupies residues 438 to 469; the sequence is GPSGEQAAEDSAEESTDAAEGEAAEDADDTDK. Positions 444–469 are enriched in acidic residues; it reads AAEDSAEESTDAAEGEAAEDADDTDK.

It belongs to the FKBP-type PPIase family. Tig subfamily.

It is found in the cytoplasm. It carries out the reaction [protein]-peptidylproline (omega=180) = [protein]-peptidylproline (omega=0). Functionally, involved in protein export. Acts as a chaperone by maintaining the newly synthesized protein in an open conformation. Functions as a peptidyl-prolyl cis-trans isomerase. This Mycolicibacterium smegmatis (strain ATCC 700084 / mc(2)155) (Mycobacterium smegmatis) protein is Trigger factor.